The primary structure comprises 71 residues: Large ribosomal subunit protein bL31 (71 aa).

Residues cysteine 16, cysteine 18, cysteine 37, and cysteine 40 each coordinate Zn(2+).

It belongs to the bacterial ribosomal protein bL31 family. Type A subfamily. In terms of assembly, part of the 50S ribosomal subunit. Requires Zn(2+) as cofactor.

In terms of biological role, binds the 23S rRNA. The polypeptide is Large ribosomal subunit protein bL31 (Pseudomonas putida (strain GB-1)).